The following is a 734-amino-acid chain: Mechanosensitive ion channel protein 10 (734 aa).

Disordered regions lie at residues 1–75 (MAEQ…LTQR) and 115–136 (SFSRASPNNKSNRSVGSPAPVT). Positions 24–39 (EASRRSKEMASPESEK) are enriched in basic and acidic residues. S34 bears the Phosphoserine mark. 2 stretches are compositionally biased toward polar residues: residues 65 to 75 (PNQNNVGLTQR) and 117 to 129 (SRASPNNKSNRSV). S128 and S131 each carry phosphoserine. A run of 6 helical transmembrane segments spans residues 164-184 (ISTLALIESAFFVVILSALVA), 196-216 (FWGLEVWKWCVLVMVIFSGML), 249-269 (SVQVFIWLCLILVAWILLFNH), 288-308 (LISILTGAFFWLVKTLLLKIL), 516-536 (LVTAILMVVTVVIWLLLLEVA), and 551-571 (LAFIIGSTCKNLFESIVFVFV).

It belongs to the MscS (TC 1.A.23) family. Detected in the root tip and throughout the vasculature of the root and leaf.

The protein localises to the cell membrane. Mechanosensitive channel that opens in response to stretch forces in the membrane lipid bilayer. The sequence is that of Mechanosensitive ion channel protein 10 (MSL10) from Arabidopsis thaliana (Mouse-ear cress).